The chain runs to 946 residues: DNA primase (946 aa).

A disordered region spans residues Arg596 to Thr626. A compositionally biased stretch (polar residues) spans Phe617–Thr626. The CHC2-type zinc finger occupies Cys881–Cys920.

Belongs to the herpesviridae DNA primase family. In terms of assembly, associates with the helicase and the primase-associated factor to form the helicase-primase factor.

The protein resides in the host nucleus. Functionally, essential component of the helicase/primase complex. Unwinds the DNA at the replication forks and generates single-stranded DNA for both leading and lagging strand synthesis. The primase initiates primer synthesis and thereby produces large amount of short RNA primers on the lagging strand that the polymerase elongates using dNTPs. This is DNA primase (UL70) from Human cytomegalovirus (strain AD169) (HHV-5).